The sequence spans 70 residues: UPF0426 protein ssl0294 (70 aa).

Belongs to the UPF0426 family.

The protein is UPF0426 protein ssl0294 of Synechocystis sp. (strain ATCC 27184 / PCC 6803 / Kazusa).